We begin with the raw amino-acid sequence, 1058 residues long: Bromodomain-containing protein 1 (1058 aa).

Over residues 1-12 (MRRKGRCHRGSA) the composition is skewed to basic residues. The tract at residues 1–25 (MRRKGRCHRGSAARHPSSPCSIKHS) is disordered. Positions 31–80 (LTYAQAQRMVEIEIEGRLHRISIFDPLEIILEDDLTAQEMSECNSNKENS) are interaction with KAT7/HBO1 and histones. Position 128 is a phosphoserine (serine 128). The segment at 214-264 (DAVCCICMDGECQNSNVILFCDMCNLAVHQECYGVPYIPEGQWLCRHCLQS) adopts a PHD-type 1 zinc-finger fold. The segment at 268–301 (PADCVLCPNKGGAFKKTDDDRWGHVVCALWIPEV) adopts a C2HC pre-PHD-type zinc-finger fold. The PHD-type 2 zinc finger occupies 325–389 (LTCYLCKQKG…RKTAYCDVHT (65 aa)). N6-acetyllysine is present on residues lysine 368, lysine 516, and lysine 519. Glycyl lysine isopeptide (Lys-Gly) (interchain with G-Cter in SUMO2) cross-links involve residues lysine 554 and lysine 594. One can recognise a Bromo domain in the interval 562–666 (LRLTPLTVLL…DQGGVVLRQA (105 aa)). Polar residues predominate over residues 754 to 763 (KLSQQHSQAP). Disordered stretches follow at residues 754–776 (KLSQ…EDEA) and 791–847 (LETL…AAPR). Serine 803 is subject to Phosphoserine. Position 903 is an N6-acetyllysine (lysine 903). A PWWP domain is found at 929–1012 (PLKVVWAKCS…KSKMVPLGVD (84 aa)). Phosphoserine is present on residues serine 1052 and serine 1055.

As to quaternary structure, component of some HBO1 complexes composed of KAT7/HBO1, MEAF6, ING4 and BRD1/BRPF2. Component of the MOZ/MORF complex composed at least of ING5, KAT6A, KAT6B, MEAF6 and one of BRPF1, BRD1/BRPF2 and BRPF3. Interacts (via PHD-type zinc finger domain) with unmodified histone H3. Interacts (via PWWP domain) with dimethylated and trimethylated 'Lys-79' on histone H3.

It localises to the nucleus. It is found in the chromosome. Scaffold subunit of various histone acetyltransferase (HAT) complexes, such as the MOZ/MORF and HBO1 complexes, that acts as a regulator of hematopoiesis. Plays a key role in HBO1 complex by directing KAT7/HBO1 specificity towards histone H3 'Lys-14' acetylation (H3K14ac), thereby promoting erythroid differentiation. This Mus musculus (Mouse) protein is Bromodomain-containing protein 1.